Consider the following 1166-residue polypeptide: ATP-dependent helicase/deoxyribonuclease subunit B (1166 aa).

Residues 1–278 (MGAEFLVGRS…LNLDITYKEL (278 aa)) enclose the UvrD-like helicase ATP-binding domain. Positions 10, 11, 14, 15, 16, 236, and 283 each coordinate ATP. Residues 281-586 (TERHTKTPEL…TFSLIPPALD (306 aa)) form the UvrD-like helicase C-terminal domain. Residues cysteine 801, cysteine 1121, cysteine 1124, and cysteine 1130 each coordinate [4Fe-4S] cluster.

The protein belongs to the helicase family. AddB/RexB type 1 subfamily. Heterodimer of AddA and AddB. Requires At low magnesium concentrations there is no nuclease activity, but helicase activity is unaffected. as cofactor. The cofactor is Mg(2+). [4Fe-4S] cluster is required as a cofactor.

In terms of biological role, the heterodimer acts both as a highly processive, ATP-dependent DNA helicase and as an ATP-dependent single-stranded exonuclease, acting in both directions. Recognizes the B.subtilis Chi site (5'-AGCGG-3') which transforms the enzyme from a helicase which degrades both DNA strands to one with only 5' to 3' exonuclease activity. This generates a double-stranded DNA with a protruding 3'-terminated single-stranded tail suitable for the initiation of homologous recombination (Chi fragment). The AddB nuclease domain is not required for Chi fragment generation but for recognition of the Chi site; this subunit has 5' -&gt; 3' nuclease activity but no helicase activity. The helicase activity of isolated AddA acts on 3'-tailed substrate and requires AddB to bind to blunt-ended DNA. RecA thread formation during DNA double-strand break repair requires RecJ or AddAB. This is ATP-dependent helicase/deoxyribonuclease subunit B from Bacillus subtilis (strain 168).